A 977-amino-acid chain; its full sequence is Dynamin-like GTPase OPA1, mitochondrial (977 aa).

Residues 1-86 (MWRTKAAAAC…VKYGYQSYRN (86 aa)) constitute a mitochondrion transit peptide. The Mitochondrial matrix segment spans residues 87–95 (FWLARLASR). Residues 96-112 (LLKIRYLILGSAVGGGY) form a helical membrane-spanning segment. Over 113–787 (TAKKTYDQWE…SVIEDMVGPD (675 aa)) the chain is Mitochondrial intermembrane. The stretch at 224 to 271 (KKVSDKEKIDQLQEELLRTQLKYQRMLERLEKENKELRKLVLQRDDKG) forms a coiled coil. The region spanning 302–578 (QDHLPRVVVV…FWKMVRESVE (277 aa)) is the Dynamin-type G domain. The interval 312–319 (GDQSAGKT) is G1 motif. GTP is bound by residues serine 315, glycine 317, lysine 318, threonine 319, serine 320, and glycine 334. Threonine 319 is a Mg(2+) binding site. The tract at residues 338 to 341 (MMTR) is G2 motif. The Mg(2+) site is built by threonine 340 and aspartate 415. The G3 motif stretch occupies residues 415 to 418 (DLPG). The G4 motif stretch occupies residues 484–487 (TKVD). Residues lysine 485, aspartate 487, and threonine 520 each contribute to the GTP site. The tract at residues 518–521 (VVTG) is G5 motif. Stalk region regions lie at residues 606-853 (DRNE…IKDT) and 891-945 (CNDI…VKLL). The interval 753–873 (SDKQQWDAAI…KTALNHCNLC (121 aa)) is paddle region. An intramembrane segment occupies 788-798 (WKKRWLYWISR). The Mitochondrial intermembrane segment spans residues 799 to 977 (TKEQNIRNET…AFIEALHQEK (179 aa)). A disulfide bridge connects residues cysteine 873 and cysteine 891. Positions 911–977 (LRQQLTNTEV…AFIEALHQEK (67 aa)) form a coiled coil.

The protein belongs to the TRAFAC class dynamin-like GTPase superfamily. Dynamin/Fzo/YdjA family. Oligomeric complex consisting of membrane-bound and soluble forms of OPA1. Post-translationally, cleaved by OMA1 or YME1L downstream of the transmembrane region in response to different signals to generate soluble forms. Cleaved by OMA1 at position S1 following stress conditions, generating the short soluble form (Dynamin-like GTPase OPA1, short form; S-OPA1).

The protein resides in the mitochondrion inner membrane. It is found in the mitochondrion intermembrane space. It carries out the reaction GTP + H2O = GDP + phosphate + H(+). Dynamin-related GTPase that is essential for normal mitochondrial morphology by mediating fusion of the mitochondrial inner membranes, regulating cristae morphology and maintaining respiratory chain function. Exists in two forms: the transmembrane, long form (Dynamin-like GTPase OPA1, long form; L-OPA1), which is tethered to the inner mitochondrial membrane, and the short soluble form (Dynamin-like GTPase OPA1, short form; S-OPA1), which results from proteolytic cleavage and localizes in the intermembrane space. Both forms (L-OPA1 and S-OPA1) cooperate to catalyze the fusion of the mitochondrial inner membrane. The equilibrium between L-OPA1 and S-OPA1 is essential: excess levels of S-OPA1, produced by cleavage by OMA1 following loss of mitochondrial membrane potential, lead to an impaired equilibrium between L-OPA1 and S-OPA1, inhibiting mitochondrial fusion. The balance between L-OPA1 and S-OPA1 also influences cristae shape and morphology. Its role in mitochondrial morphology is required for mitochondrial genome maintenance. Its function is as follows. Constitutes the transmembrane long form (L-OPA1) that plays a central role in mitochondrial inner membrane fusion and cristae morphology. L-OPA1 and the soluble short form (S-OPA1) form higher-order helical assemblies that coordinate the fusion of mitochondrial inner membranes. Inner membrane-anchored L-OPA1 molecules initiate membrane remodeling by recruiting soluble S-OPA1 to rapidly polymerize into a flexible cylindrical scaffold encaging the mitochondrial inner membrane. Once at the membrane surface, the formation of S-OPA1 helices induce bilayer curvature. OPA1 dimerization through the paddle region, which inserts into cardiolipin-containing membrane, promotes GTP hydrolysis and the helical assembly of a flexible OPA1 lattice on the membrane, which drives membrane curvature and mitochondrial fusion. Plays a role in the maintenance and remodeling of mitochondrial cristae, some invaginations of the mitochondrial inner membrane that provide an increase in the surface area. Probably acts by forming helical filaments at the inside of inner membrane tubes with the shape and dimensions of crista junctions. Functionally, constitutes the soluble short form (S-OPA1) generated by cleavage by OMA1, which plays a central role in mitochondrial inner membrane fusion and cristae morphology. The transmembrane long form (L-OPA1) and the S-OPA1 form higher-order helical assemblies that coordinate the fusion of mitochondrial inner membranes. Inner membrane-anchored L-OPA1 molecules initiate membrane remodeling by recruiting soluble S-OPA1 to rapidly polymerize into a flexible cylindrical scaffold encaging the mitochondrial inner membrane. Once at the membrane surface, the formation of S-OPA1 helices induce bilayer curvature. OPA1 dimerization through the paddle region, which inserts into cardiolipin-containing membrane, promotes GTP hydrolysis and the helical assembly of a flexible OPA1 lattice on the membrane, which drives membrane curvature and mitochondrial fusion. Excess levels of S-OPA1 produced by cleavage by OMA1 following stress conditions that induce loss of mitochondrial membrane potential, lead to an impaired equilibrium between L-OPA1 and S-OPA1, thereby inhibiting mitochondrial fusion. Plays a role in the maintenance and remodeling of mitochondrial cristae, some invaginations of the mitochondrial inner membrane that provide an increase in the surface area. Probably acts by forming helical filaments at the inside of inner membrane tubes with the shape and dimensions of crista junctions. The sequence is that of Dynamin-like GTPase OPA1, mitochondrial from Gallus gallus (Chicken).